We begin with the raw amino-acid sequence, 1047 residues long: Jouberin (1047 aa).

2 stretches are compositionally biased toward basic and acidic residues: residues 1 to 17 and 77 to 86; these read MEQETPEKVDSAQEKVR and LLHDDKLGSE. 2 disordered regions span residues 1–44 and 67–185; these read MEQE…LTEA and EQLT…SPVH. The interaction with HAP1 stretch occupies residues 1 to 285; that stretch reads MEQETPEKVD…IFNENFPYLL (285 aa). A compositionally biased stretch (basic residues) spans 87 to 96; it reads KRKKKKKKKV. The segment covering 116–132 has biased composition (basic and acidic residues); sequence GEQKKEGAPEGSHHREG. Residues 150 to 160 are compositionally biased toward basic residues; the sequence is PKPKKMKKKPK. Basic and acidic residues predominate over residues 173-185; that stretch reads GVHEITGRDSPVH. WD repeat units follow at residues 458-500, 503-542, 546-586, 593-632, 649-688, 692-731, and 736-777; these read AGER…FMRE, GHLNIIYDLDWSKDDRYLVTSSSDGTARVWKNEINSTSTF, PHPS…DAAI, VHKSFVNSICFDDEGHHMYSGDCIGVIAVWDTYVKVTDVQ, FRGVPVSYLEVHPNGKRLLIHTKDSTLRIMDLRILAARKF, ANYREKIHSTLTPCGTLLFSGSEDGIVYVWNPETGEQVAM, and PFKS…AQQE. At S854 the chain carries Phosphoserine. Residues 903–963 enclose the SH3 domain; it reads DPPPMVVALY…PANHVASETL (61 aa). Composition is skewed to basic and acidic residues over residues 964–1003 and 1012–1040; these read YRDSPPKVKERSPPLTPKEKAKMEKPPASRKSLIKDRFLD and GHSEKGRDQNFEERGHKSDMEMKKSEPTV. Positions 964 to 1047 are disordered; the sequence is YRDSPPKVKE…PTVRKVTLIE (84 aa). S975 bears the Phosphoserine mark.

Self-associates. Part of the tectonic-like complex (also named B9 complex). Interacts with MKS1. Interacts with NPHP1; probably as heterodimers and/or AHI1(2):NPHP1(2) heterotetramers. Interacts (via SH3 domain) with the dynamin GTPase DNM2. Interacts with HAP1; probably as AHI1(2):HAP1(2) heterotetramers. Interacts with RAB8A. Interacts with CEND1. Interacts with SPATA7.

Its subcellular location is the cytoplasm. The protein localises to the cytoskeleton. It localises to the cilium basal body. It is found in the microtubule organizing center. The protein resides in the centrosome. Its subcellular location is the centriole. The protein localises to the cell junction. It localises to the adherens junction. In terms of biological role, involved in vesicle trafficking and required for ciliogenesis, formation of primary non-motile cilium, and recruitment of RAB8A to the basal body of primary cilium. Component of the tectonic-like complex, a complex localized at the transition zone of primary cilia and acting as a barrier that prevents diffusion of transmembrane proteins between the cilia and plasma membranes. Involved in neuronal differentiation. As a positive modulator of classical Wnt signaling, may play a crucial role in ciliary signaling during cerebellum embryonic development. The polypeptide is Jouberin (Ahi1) (Rattus norvegicus (Rat)).